A 511-amino-acid polypeptide reads, in one-letter code: Peroxisomal N(1)-acetyl-spermine/spermidine oxidase (511 aa).

The residue at position 1 (Met1) is an N-acetylmethionine. FAD is bound by residues Ala24, Glu45, Arg53, and 69–70; that span reads HW. Substrate contacts are provided by His72 and Val194. Residue Val247 coordinates FAD. Asn320 serves as a coordination point for substrate. FAD is bound by residues Glu472 and 481 to 482; that span reads TT. The Microbody targeting signal signature appears at 509-511; the sequence is PRL.

Belongs to the flavin monoamine oxidase family. Monomer. Requires FAD as cofactor. Widely expressed. Not detected in spleen. Expressed at lower level in neoplastic tissues.

It localises to the peroxisome. The protein resides in the cytoplasm. The catalysed reaction is N(1)-acetylspermine + O2 + H2O = 3-acetamidopropanal + spermidine + H2O2. It catalyses the reaction N(1)-acetylspermidine + O2 + H2O = 3-acetamidopropanal + putrescine + H2O2. The enzyme catalyses N(1),N(12)-diacetylspermine + O2 + H2O = 3-acetamidopropanal + N(1)-acetylspermidine + H2O2. It functions in the pathway amine and polyamine metabolism; spermine metabolism. In terms of biological role, flavoenzyme which catalyzes the oxidation of N(1)-acetylspermine to spermidine and is thus involved in the polyamine back-conversion. Can also oxidize N(1)-acetylspermidine to putrescine. Substrate specificity: N(1)-acetylspermine = N(1)-acetylspermidine &gt; N(1),N(12)-diacylspermine &gt;&gt; spermine. Does not oxidize spermidine. Plays an important role in the regulation of polyamine intracellular concentration and has the potential to act as a determinant of cellular sensitivity to the antitumor polyamine analogs. In Homo sapiens (Human), this protein is Peroxisomal N(1)-acetyl-spermine/spermidine oxidase (PAOX).